The primary structure comprises 306 residues: tRNA dimethylallyltransferase (306 aa).

12-19 provides a ligand contact to ATP; sequence GPTAAGKT. 14-19 is a binding site for substrate; it reads TAAGKT. 3 interaction with substrate tRNA regions span residues 37 to 40, 161 to 165, and 242 to 247; these read DSAL, QRINR, and RCVGYR.

It belongs to the IPP transferase family. Monomer. It depends on Mg(2+) as a cofactor.

It catalyses the reaction adenosine(37) in tRNA + dimethylallyl diphosphate = N(6)-dimethylallyladenosine(37) in tRNA + diphosphate. Its function is as follows. Catalyzes the transfer of a dimethylallyl group onto the adenine at position 37 in tRNAs that read codons beginning with uridine, leading to the formation of N6-(dimethylallyl)adenosine (i(6)A). The sequence is that of tRNA dimethylallyltransferase from Pseudoalteromonas translucida (strain TAC 125).